A 542-amino-acid chain; its full sequence is Protein phosphatase 1G (542 aa).

G2 carries the N-myristoyl glycine lipid modification. R22 is modified (omega-N-methylarginine). One can recognise a PPM-type phosphatase domain in the interval 26 to 502 (PYGFSAMQGW…DNMTCIIICF (477 aa)). D60 and G61 together coordinate Mn(2+). 2 disordered regions span residues 118-139 (AGRPTEDEDDKEKVADEDDVDN) and 162-325 (QNCQ…SDSG). T122 bears the Phosphothreonine mark. Composition is skewed to acidic residues over residues 123 to 139 (EDEDDKEKVADEDDVDN) and 259 to 309 (DSED…DEEM). K380 is subject to N6-acetyllysine. Residues D438 and D493 each coordinate Mn(2+). The tract at residues 510–542 (LQPESGKRKLEEALSTEGAEENGNSDKKKAKRD) is disordered. Residue S524 is modified to Phosphoserine.

It belongs to the PP2C family. In terms of assembly, interacts with NOL3; may dephosphorylate NOL3. It depends on Mg(2+) as a cofactor. The cofactor is Mn(2+).

It is found in the cytoplasm. Its subcellular location is the membrane. It carries out the reaction O-phospho-L-seryl-[protein] + H2O = L-seryl-[protein] + phosphate. The catalysed reaction is O-phospho-L-threonyl-[protein] + H2O = L-threonyl-[protein] + phosphate. This is Protein phosphatase 1G from Rattus norvegicus (Rat).